The primary structure comprises 986 residues: Translation initiation factor IF-2 (986 aa).

A disordered region spans residues 47–388 (SAPAQTPHKE…RSKGRKGKYE (342 aa)). Positions 53–64 (PHKEVSQEEVRV) are enriched in basic and acidic residues. Over residues 78–94 (PEAASAEAASAPAAQEE) the composition is skewed to low complexity. Basic and acidic residues predominate over residues 95 to 113 (APQKAEPEKVEAEKAEAPK). Low complexity-rich tracts occupy residues 127–141 (EAAPVPKPAAAPAEA) and 153–214 (APVA…QAPA). Composition is skewed to basic and acidic residues over residues 215-225 (KAEEQEPEKAT) and 268-278 (GVERPGTERPA). Over residues 286 to 300 (PAGAPGRPGERPTTG) the composition is skewed to low complexity. Basic and acidic residues predominate over residues 358 to 374 (GKKDSFKDILDKRERVF). The tr-type G domain maps to 486 to 653 (KRPPVVTIMG…MVLLQADVLE (168 aa)). Residues 495 to 502 (GHVDHGKT) form a G1 region. 495 to 502 (GHVDHGKT) is a binding site for GTP. The G2 stretch occupies residues 520–524 (GITQH). Residues 541–544 (DTPG) are G3. GTP-binding positions include 541–545 (DTPGH) and 595–598 (NKID). The segment at 595-598 (NKID) is G4. The interval 631–633 (SAK) is G5.

The protein belongs to the TRAFAC class translation factor GTPase superfamily. Classic translation factor GTPase family. IF-2 subfamily.

The protein resides in the cytoplasm. Functionally, one of the essential components for the initiation of protein synthesis. Protects formylmethionyl-tRNA from spontaneous hydrolysis and promotes its binding to the 30S ribosomal subunits. Also involved in the hydrolysis of GTP during the formation of the 70S ribosomal complex. The polypeptide is Translation initiation factor IF-2 (Citrifermentans bemidjiense (strain ATCC BAA-1014 / DSM 16622 / JCM 12645 / Bem) (Geobacter bemidjiensis)).